The following is a 90-amino-acid chain: Probable Fe(2+)-trafficking protein (90 aa).

The protein belongs to the Fe(2+)-trafficking protein family.

In terms of biological role, could be a mediator in iron transactions between iron acquisition and iron-requiring processes, such as synthesis and/or repair of Fe-S clusters in biosynthetic enzymes. This chain is Probable Fe(2+)-trafficking protein, found in Stutzerimonas stutzeri (strain A1501) (Pseudomonas stutzeri).